Consider the following 320-residue polypeptide: o-succinylbenzoate synthase (320 aa).

The active-site Proton donor is the lysine 133. Mg(2+) contacts are provided by aspartate 161, glutamate 190, and aspartate 213. Lysine 235 functions as the Proton acceptor in the catalytic mechanism.

The protein belongs to the mandelate racemase/muconate lactonizing enzyme family. MenC type 1 subfamily. The cofactor is a divalent metal cation.

It catalyses the reaction (1R,6R)-6-hydroxy-2-succinyl-cyclohexa-2,4-diene-1-carboxylate = 2-succinylbenzoate + H2O. It participates in quinol/quinone metabolism; 1,4-dihydroxy-2-naphthoate biosynthesis; 1,4-dihydroxy-2-naphthoate from chorismate: step 4/7. Its pathway is quinol/quinone metabolism; menaquinone biosynthesis. In terms of biological role, converts 2-succinyl-6-hydroxy-2,4-cyclohexadiene-1-carboxylate (SHCHC) to 2-succinylbenzoate (OSB). In Escherichia coli O17:K52:H18 (strain UMN026 / ExPEC), this protein is o-succinylbenzoate synthase.